A 423-amino-acid chain; its full sequence is Kynureninase (423 aa).

Pyridoxal 5'-phosphate-binding positions include leucine 105, serine 106, 133-136 (FPSD), aspartate 218, histidine 221, and tyrosine 243. An N6-(pyridoxal phosphate)lysine modification is found at lysine 244. Residues tryptophan 273 and asparagine 301 each contribute to the pyridoxal 5'-phosphate site.

This sequence belongs to the kynureninase family. As to quaternary structure, homodimer. Pyridoxal 5'-phosphate is required as a cofactor.

It carries out the reaction L-kynurenine + H2O = anthranilate + L-alanine + H(+). The catalysed reaction is 3-hydroxy-L-kynurenine + H2O = 3-hydroxyanthranilate + L-alanine + H(+). It participates in amino-acid degradation; L-kynurenine degradation; L-alanine and anthranilate from L-kynurenine: step 1/1. It functions in the pathway cofactor biosynthesis; NAD(+) biosynthesis; quinolinate from L-kynurenine: step 2/3. Functionally, catalyzes the cleavage of L-kynurenine (L-Kyn) and L-3-hydroxykynurenine (L-3OHKyn) into anthranilic acid (AA) and 3-hydroxyanthranilic acid (3-OHAA), respectively. The protein is Kynureninase of Xanthomonas oryzae pv. oryzae (strain KACC10331 / KXO85).